A 166-amino-acid polypeptide reads, in one-letter code: Co-chaperone protein HscB homolog (166 aa).

The J domain maps to 3–75; sequence QYFTLFRIEP…IDRAAYLLKT (73 aa).

It belongs to the HscB family. In terms of assembly, interacts with HscA and stimulates its ATPase activity.

Co-chaperone involved in the maturation of iron-sulfur cluster-containing proteins. Seems to help targeting proteins to be folded toward HscA. This Neisseria gonorrhoeae (strain NCCP11945) protein is Co-chaperone protein HscB homolog.